The primary structure comprises 3329 residues: Breast cancer type 2 susceptibility protein homolog (3329 aa).

An interaction with PALB2 region spans residues 1-40 (MPVEYKRRPTFWEIFKARCSTADLGPISLNWFEELSSEAP). 2 disordered regions span residues 37-69 (SEAP…QRNP) and 207-241 (EARS…SVPS). Phosphoserine is present on residues S435 and S481. The segment at 628–650 (PDSSDKKRCLPNDPEEPSLTNSF) is disordered. The interval 628 to 979 (PDSSDKKRCL…DKWSEFLDPV (352 aa)) is interaction with NPM1. At S735 the chain carries Phosphoserine. Residues 934–953 (EKSRNNIEQHQKGTEDKDFK) are compositionally biased toward basic and acidic residues. Residues 934–965 (EKSRNNIEQHQKGTEDKDFKSNSSLNMKSDGN) are disordered. Over residues 954–965 (SNSSLNMKSDGN) the composition is skewed to polar residues. BRCA2 repeat units lie at residues 981 to 1015 (NHNF…DIEE) and 1192 to 1226 (NEME…DIEN). The tract at residues 982-2035 (HNFGGSFRTA…LHKVKGMLEE (1054 aa)) is interaction with RAD51. Residues 1296–1340 (NTKHEDSYTSSQRNNLENSDGSMSSTSGPVYIHKGDSDLPADQGS) form a disordered region. The segment covering 1303 to 1323 (YTSSQRNNLENSDGSMSSTSG) has biased composition (polar residues). 5 BRCA2 repeats span residues 1394-1428 (IKEF…RETD), 1491-1525 (KEPT…ETQY), 1623-1657 (TEDS…EQGD), 1924-1958 (PSRT…EMDG), and 2004-2038 (NSSV…EFDL). S2048 carries the phosphoserine modification. Residues 2073-2099 (NSKLQKTYNDKSSLPSNYKESGSSGNT) form a disordered region. Positions 2074-2099 (SKLQKTYNDKSSLPSNYKESGSSGNT) are enriched in polar residues. The segment at 2219 to 2285 (KRGGVTVDAV…EPVTCGPFCS (67 aa)) is interaction with HSF2BP. The segment at 2298-2466 (TSPAQELLSK…SPKQLYIYGV (169 aa)) is interaction with FANCD2. A disordered region spans residues 2361-2393 (FHGDEHFNSKNVNLEGKNQKSTDGDREDGNDSH). Residues 2377-2393 (KNQKSTDGDREDGNDSH) show a composition bias toward basic and acidic residues. Positions 2402–2753 (MSSLQSARDL…QRVYPLQWVE (352 aa)) are interaction with SEM1. Positions 2603–2619 (AAKTLVLCISDIISPST) match the Nuclear export signal; masked by interaction with SEM1 motif. The residue at position 3214 (S3214) is a Phosphoserine; by CDK1 and CDK2. Disordered regions lie at residues 3221–3257 (FQPP…VSLP) and 3273–3329 (QALT…AVES). At S3241 the chain carries Phosphoserine. The segment covering 3309 to 3329 (SRKESLRDCRGDSSEKLAVES) has biased composition (basic and acidic residues).

In terms of assembly, monomer and dimer. Interacts with RAD51; regulates RAD51 recruitment and function at sites of DNA repair. Interacts with SEM1, WDR16, USP11, DMC1, ROCK2 and NPM1. Interacts with both nonubiquitinated and monoubiquitinated FANCD2; this complex also includes XRCC3 and phosphorylated FANCG. Part of a BRCA complex containing BRCA1, BRCA2 and PALB2. Component of the homologous recombination repair (HR) complex composed of ERCC5/XPG, BRCA2, PALB2, DSS1 and RAD51. Within the complex, interacts with ERCC5/XPG and PALB2. Interacts directly with PALB2 which may serve as a scaffold for a HR complex containing PALB2, BRCA2, RAD51C, RAD51 and XRCC3. Interacts with BRCA1 only in the presence of PALB2 which serves as the bridging protein. Interacts with POLH; the interaction is direct. Interacts with the TREX-2 complex subunits PCID2 and SEM1. Interacts with HSF2BP and BRME1; the interaction with HSF2BP is direct and allows the formation of a ternary complex. The complex BRME1:HSF2BP:BRCA2 interacts with SPATA22, MEIOB and RAD51. Post-translationally, phosphorylated by ATM upon irradiation-induced DNA damage. Phosphorylation by CHEK1 and CHEK2 regulates interaction with RAD51. Phosphorylation at Ser-3291 by CDK1 and CDK2 is low in S phase when recombination is active, but increases as cells progress towards mitosis; this phosphorylation prevents homologous recombination-dependent repair during S phase and G2 by inhibiting RAD51 binding. In terms of processing, ubiquitinated in the absence of DNA damage; this does not lead to proteasomal degradation. In contrast, ubiquitination in response to DNA damage leads to proteasomal degradation. Widely expressed. Highest expression in cerebellum, testis, ileum, appendix, epididymis, ovary and mammary gland. No expression in lung.

It localises to the nucleus. It is found in the cytoplasm. The protein localises to the cytoskeleton. The protein resides in the microtubule organizing center. Its subcellular location is the centrosome. Functionally, involved in double-strand break repair and/or homologous recombination. Binds RAD51 and potentiates recombinational DNA repair by promoting assembly of RAD51 onto single-stranded DNA (ssDNA). Acts by targeting RAD51 to ssDNA over double-stranded DNA, enabling RAD51 to displace replication protein-A (RPA) from ssDNA and stabilizing RAD51-ssDNA filaments by blocking ATP hydrolysis. Part of a PALB2-scaffolded HR complex containing RAD51C and which is thought to play a role in DNA repair by HR. May participate in S phase checkpoint activation. Binds selectively to ssDNA, and to ssDNA in tailed duplexes and replication fork structures. May play a role in the extension step after strand invasion at replication-dependent DNA double-strand breaks; together with PALB2 is involved in both POLH localization at collapsed replication forks and DNA polymerization activity. In concert with NPM1, regulates centrosome duplication. Interacts with the TREX-2 complex (transcription and export complex 2) subunits PCID2 and SEM1, and is required to prevent R-loop-associated DNA damage and thus transcription-associated genomic instability, independently of its known role in homologous recombination. This chain is Breast cancer type 2 susceptibility protein homolog, found in Mus musculus (Mouse).